A 159-amino-acid chain; its full sequence is Endoribonuclease YbeY (159 aa).

3 residues coordinate Zn(2+): His125, His129, and His135.

Belongs to the endoribonuclease YbeY family. The cofactor is Zn(2+).

Its subcellular location is the cytoplasm. Single strand-specific metallo-endoribonuclease involved in late-stage 70S ribosome quality control and in maturation of the 3' terminus of the 16S rRNA. This Lactiplantibacillus plantarum (strain ATCC BAA-793 / NCIMB 8826 / WCFS1) (Lactobacillus plantarum) protein is Endoribonuclease YbeY.